A 293-amino-acid chain; its full sequence is Ribonuclease HIII (293 aa).

The region spanning 78–293 is the RNase H type-2 domain; that stretch reads LPLIGTDEVG…TEKAKKRLER (216 aa). Residues aspartate 84, glutamate 85, and aspartate 187 each contribute to the a divalent metal cation site.

It belongs to the RNase HII family. RnhC subfamily. Mn(2+) is required as a cofactor. The cofactor is Mg(2+).

The protein localises to the cytoplasm. It catalyses the reaction Endonucleolytic cleavage to 5'-phosphomonoester.. In terms of biological role, endonuclease that specifically degrades the RNA of RNA-DNA hybrids. The protein is Ribonuclease HIII of Streptococcus pneumoniae (strain Taiwan19F-14).